Consider the following 88-residue polypeptide: DNA-directed RNA polymerase subunit omega (88 aa).

This sequence belongs to the RNA polymerase subunit omega family. The RNAP catalytic core consists of 2 alpha, 1 beta, 1 beta' and 1 omega subunit. When a sigma factor is associated with the core the holoenzyme is formed, which can initiate transcription.

The catalysed reaction is RNA(n) + a ribonucleoside 5'-triphosphate = RNA(n+1) + diphosphate. Promotes RNA polymerase assembly. Latches the N- and C-terminal regions of the beta' subunit thereby facilitating its interaction with the beta and alpha subunits. This is DNA-directed RNA polymerase subunit omega from Thermobifida fusca (strain YX).